Consider the following 93-residue polypeptide: UPF0521 protein B (93 aa).

Positions 2–58 (SLKEVITSLKNDFHSINKEIDSMKENNEKQEEKIFQEIKKLKLEMELLRKDNLSFKT) form a coiled coil.

The protein belongs to the UPF0521 family.

This chain is UPF0521 protein B, found in Dictyostelium discoideum (Social amoeba).